Reading from the N-terminus, the 333-residue chain is Outer membrane protein assembly factor BamC (333 aa).

The first 18 residues, 1–18, serve as a signal peptide directing secretion; that stretch reads MKKCLFPLSVLAVIVATG. Cysteine 19 carries the N-palmitoyl cysteine lipid modification. A lipid anchor (S-diacylglycerol cysteine) is attached at cysteine 19.

It belongs to the BamC family. In terms of assembly, part of the Bam complex.

Its subcellular location is the cell outer membrane. In terms of biological role, part of the outer membrane protein assembly complex, which is involved in assembly and insertion of beta-barrel proteins into the outer membrane. The sequence is that of Outer membrane protein assembly factor BamC from Actinobacillus succinogenes (strain ATCC 55618 / DSM 22257 / CCUG 43843 / 130Z).